A 235-amino-acid polypeptide reads, in one-letter code: 7-cyano-7-deazaguanine synthase (235 aa).

ATP is bound at residue 10–20 (FSGGQDSTTCL). The Zn(2+) site is built by Cys198, Cys213, Cys216, and Cys219.

The protein belongs to the QueC family. Requires Zn(2+) as cofactor.

It catalyses the reaction 7-carboxy-7-deazaguanine + NH4(+) + ATP = 7-cyano-7-deazaguanine + ADP + phosphate + H2O + H(+). It functions in the pathway purine metabolism; 7-cyano-7-deazaguanine biosynthesis. Its function is as follows. Catalyzes the ATP-dependent conversion of 7-carboxy-7-deazaguanine (CDG) to 7-cyano-7-deazaguanine (preQ(0)). The sequence is that of 7-cyano-7-deazaguanine synthase from Paracidovorax citrulli (strain AAC00-1) (Acidovorax citrulli).